We begin with the raw amino-acid sequence, 150 residues long: Troponin C, isoform 2A (150 aa).

Met1 is subject to N-acetylmethionine. 4 EF-hand domains span residues 7–42, 43–78, 83–118, and 119–150; these read EQIGALQKAFDSFDTDSKGFITPETVGVILRMMGVK, ISEKNLQEVIAETDEDGSGELEFEEFVELAAKFLIE, ALKTELREAFRVYDKEGNGYITTDVLKEILRELDNR, and LTEEDLDSIIEEVDEDGSGTLDFNEFMEMMNG. Ca(2+) is bound by residues Asp56, Asp58, Ser60, Glu62, and Glu67. Residues Asp132, Asp134, Ser136, Thr138, and Glu143 each contribute to the Ca(2+) site.

Belongs to the troponin C family.

Functionally, troponin is the central regulatory protein of striated muscle contraction. Tn consists of three components: Tn-I which is the inhibitor of actomyosin ATPase, Tn-T which contains the binding site for tropomyosin and Tn-C. The binding of calcium to Tn-C abolishes the inhibitory action of Tn on actin filaments. The protein is Troponin C, isoform 2A of Homarus americanus (American lobster).